A 707-amino-acid chain; its full sequence is Lipase maturation factor 2 (707 aa).

10 helical membrane passes run 10-30 (LFLQ…YTQI), 78-98 (LELL…LSPL), 102-122 (VIYL…QVFL), 123-143 (YFQW…VAPL), 165-185 (DLPF…SGVV), 227-247 (LSVV…FAPI), 259-279 (VLLQ…LMTL), 310-330 (ALLA…LAYG), 364-384 (LTLP…LSAL), and 399-419 (AVVQ…ISLV). Asparagine 489 and asparagine 616 each carry an N-linked (GlcNAc...) asparagine glycan. The helical transmembrane segment at 637 to 657 (ALLWGLLMAVGAVRFVQALLA) threads the bilayer. The interval 665-707 (PLAPVSGEKRRPASQKDSGAASEQATAAPNPCSSSSRTTRRKK) is disordered. A compositionally biased stretch (polar residues) spans 679–691 (QKDSGAASEQATA).

The protein belongs to the lipase maturation factor family.

It is found in the endoplasmic reticulum membrane. In terms of biological role, involved in the maturation of specific proteins in the endoplasmic reticulum. May be required for maturation and transport of active lipoprotein lipase (LPL) through the secretory pathway. The sequence is that of Lipase maturation factor 2 (LMF2) from Homo sapiens (Human).